Here is a 132-residue protein sequence, read N- to C-terminus: uncharacterized protein (132 aa).

Positions 39 to 93 (HPAGASEALGALPPPRQLVEKRRVSPPRRLDQSGRDGGAVAKCSLSRGLSPPGWT) are disordered. Over residues 56 to 72 (LVEKRRVSPPRRLDQSG) the composition is skewed to basic and acidic residues.

This is an uncharacterized protein from Homo sapiens (Human).